The chain runs to 193 residues: Holliday junction branch migration complex subunit RuvA (193 aa).

Positions 1-64 (MIGRIAGTLI…EDAHLLYGFG (64 aa)) are domain I. The segment at 65-143 (TAAERETFRQ…ADLGTVPGGP (79 aa)) is domain II. The flexible linker stretch occupies residues 144-151 (AVSDDAVD). The segment at 151–193 (DVLNALLALGYSDKEAAQAIKQVPAGTGVSEGIKLALKALSKG) is domain III.

Belongs to the RuvA family. As to quaternary structure, homotetramer. Forms an RuvA(8)-RuvB(12)-Holliday junction (HJ) complex. HJ DNA is sandwiched between 2 RuvA tetramers; dsDNA enters through RuvA and exits via RuvB. An RuvB hexamer assembles on each DNA strand where it exits the tetramer. Each RuvB hexamer is contacted by two RuvA subunits (via domain III) on 2 adjacent RuvB subunits; this complex drives branch migration. In the full resolvosome a probable DNA-RuvA(4)-RuvB(12)-RuvC(2) complex forms which resolves the HJ.

The protein resides in the cytoplasm. The RuvA-RuvB-RuvC complex processes Holliday junction (HJ) DNA during genetic recombination and DNA repair, while the RuvA-RuvB complex plays an important role in the rescue of blocked DNA replication forks via replication fork reversal (RFR). RuvA specifically binds to HJ cruciform DNA, conferring on it an open structure. The RuvB hexamer acts as an ATP-dependent pump, pulling dsDNA into and through the RuvAB complex. HJ branch migration allows RuvC to scan DNA until it finds its consensus sequence, where it cleaves and resolves the cruciform DNA. The chain is Holliday junction branch migration complex subunit RuvA from Ralstonia nicotianae (strain ATCC BAA-1114 / GMI1000) (Ralstonia solanacearum).